The sequence spans 467 residues: Zinc finger protein 410 (467 aa).

2 disordered regions span residues 84-111 and 187-214; these read PDGE…SLLQ and NAKT…PLPQ. 5 C2H2-type zinc fingers span residues 219-243, 249-273, 279-303, 309-333, and 339-362; these read LKCT…LKTH, FICP…MRTH, FVCP…LRIH, FLCE…LVVH, and HQCQ…RKHH. 20 residues coordinate Zn(2+): C221, C226, H239, H243, C251, C256, H269, H273, C281, C286, H299, H303, C311, C316, H329, H333, C341, C344, H357, and H361.

Interacts with CDKN2A/p14ARF. O-glycosylated. O-GlcNAcylation may occur in response to increasing glucose levels and affect transcription factor activity. In terms of processing, sumoylated. Sumoylation increases its half-life, possibly by blocking ubiquitin-mediated degradation.

It is found in the nucleus. The protein resides in the chromosome. In terms of biological role, transcription factor that binds to the sequence motif 5'-CATCCCATAATA-3', and is specifically required to silence expression of fetal hemoglobin in adult erythroid cells. Prevents expression of fetal hemoglobin genes HBG1 and HBG2 through CHD4: acts as a direct transcriptional activator of CHD4, a central component of the NuRD complex that represses transcription of fetal hemoglobin genes HBG1 and HBG2 in erythroid cells. May also activate transcription of matrix-remodeling genes such as MMP1 during fibroblast senescence. May activate transcription of the gap junction gene GJC1, perhaps in response to increasing glucose. However, recent studies suggest that ZNF410 is dedicated to regulate expression of a single gene: CHD4. The polypeptide is Zinc finger protein 410 (Bos taurus (Bovine)).